The following is a 28-amino-acid chain: M-poneritoxin-Dq4b/U1-poneritoxin-Dq4c/U1-poneritoxin-Dq4d (28 aa).

At M20 the chain carries Methionine sulfoxide; in form U1-PONTX-Dq4d. The residue at position 28 (A28) is an Alanine amide; in form Dq-1362 and U1-PONTX-Dq4d.

Post-translationally, occurs in 3 forms, M-PONTX-Dq4b has an amidated Ala-28, U1-PONTX-Dq4d has an amidated Ala-28 and an oxidized Met-20, U1-PONTX-Dq4c has no modifications at either Met-20 or Ala-28. Expressed by the venom gland.

It is found in the secreted. In terms of biological role, M-poneritoxin-Dq4b: this synthetic peptide has antimicrobial activity against Gram-positive bacteria B.amyloliquefacies S499 (MIC=0.1 mM), L.monocytogenes 2231 and S.aureus ATCC 29213, against Gram-negative bacteria P.putida BTP1, P.aeruginosa PaO1 and E.coli ATCC 10536, and against the fungi S.cerevisiae, R.mucilaginosa and C.cucumerinum. Not active against the fungi F.oxysporum and B.cinerea. This Dinoponera quadriceps (South American ant) protein is M-poneritoxin-Dq4b/U1-poneritoxin-Dq4c/U1-poneritoxin-Dq4d.